The sequence spans 431 residues: Putative malic acid transport protein (431 aa).

The next 10 helical transmembrane spans lie at 30 to 50, 62 to 82, 101 to 121, 136 to 156, 167 to 187, 201 to 221, 239 to 259, 284 to 304, 318 to 338, and 346 to 366; these read FTWAWFASAMGTGGIGMVTSL, GKIIFIFQLSILTLYICCITF, VLFMPTALLAIATSISNLYPY, ILYWIFVAVACIFVISLFYSL, IIPALVLPIFPCMICGVIASA, VVAGIAFQGLGFWIYIIVYAV, GMFILVSPPSFTGLTLLDLAF, FMALFMIGLGIFNFCLAFVSV, VSWFAMIFANVGLVMDVQELG, and VCIVGQVCGVTITIVWIILIL. Basic and acidic residues predominate over residues 402-424; the sequence is EEEKDEAERSKRKAEESDGKTTR. The tract at residues 402–431 is disordered; sequence EEEKDEAERSKRKAEESDGKTTRELTSGGL.

This sequence belongs to the tellurite-resistance/dicarboxylate transporter (TDT) family.

The protein localises to the membrane. The sequence is that of Putative malic acid transport protein from Schizosaccharomyces pombe (strain 972 / ATCC 24843) (Fission yeast).